Here is a 274-residue protein sequence, read N- to C-terminus: MSVQSAIRRRTAPDIRARKNGDPIVMLTSYHAHTAALVDRYCDVILVGDSLGNVMHGFETTVPVTLDMMILQGRAVMRGSQQALVVVDMPFGSYEASKEQAFHSAARLLKETLCGAVKLEGGVKMAETIAFLSARGIPVMGHVGLTPQSINTLGSFRAQGREEGTWQPIEDDARAVAEAGAFSMVIEAVAEPLARRITETVAIPTIGIGASPACDGQVLVLEDMLGLSPRAPKFVRRYGELGPMIEAAIEGYARDVRSRAFPGPEHVYAMKPKS.

2 residues coordinate Mg(2+): aspartate 49 and aspartate 88. 3-methyl-2-oxobutanoate is bound by residues 49–50 (DS), aspartate 88, and lysine 118. Position 120 (glutamate 120) interacts with Mg(2+). The active-site Proton acceptor is glutamate 187.

This sequence belongs to the PanB family. Homodecamer; pentamer of dimers. The cofactor is Mg(2+).

It localises to the cytoplasm. The enzyme catalyses 3-methyl-2-oxobutanoate + (6R)-5,10-methylene-5,6,7,8-tetrahydrofolate + H2O = 2-dehydropantoate + (6S)-5,6,7,8-tetrahydrofolate. It participates in cofactor biosynthesis; (R)-pantothenate biosynthesis; (R)-pantoate from 3-methyl-2-oxobutanoate: step 1/2. Catalyzes the reversible reaction in which hydroxymethyl group from 5,10-methylenetetrahydrofolate is transferred onto alpha-ketoisovalerate to form ketopantoate. This chain is 3-methyl-2-oxobutanoate hydroxymethyltransferase, found in Nitrobacter winogradskyi (strain ATCC 25391 / DSM 10237 / CIP 104748 / NCIMB 11846 / Nb-255).